A 313-amino-acid polypeptide reads, in one-letter code: Protein FixB (313 aa).

Residue 255–283 (LYLAVGISGQIQHMVGANASQTIFAINKD) participates in FAD binding.

This sequence belongs to the ETF alpha-subunit/FixB family. Heterodimer of FixA and FixB.

It participates in amine and polyamine metabolism; carnitine metabolism. In terms of biological role, required for anaerobic carnitine reduction. May bring reductant to CaiA. The chain is Protein FixB from Escherichia coli (strain K12 / MC4100 / BW2952).